We begin with the raw amino-acid sequence, 278 residues long: S-methyl-5'-thioadenosine phosphorylase (278 aa).

Residues Ser-13, 55–56, and 88–89 each bind phosphate; these read RH and TA. Position 190 (Met-190) interacts with substrate. Phosphate is bound at residue Thr-191. Residue 214–216 participates in substrate binding; the sequence is DYD.

Belongs to the PNP/MTAP phosphorylase family. MTAP subfamily. Homotrimer.

It localises to the cytoplasm. Its subcellular location is the nucleus. The enzyme catalyses S-methyl-5'-thioadenosine + phosphate = 5-(methylsulfanyl)-alpha-D-ribose 1-phosphate + adenine. The protein operates within amino-acid biosynthesis; L-methionine biosynthesis via salvage pathway; S-methyl-5-thio-alpha-D-ribose 1-phosphate from S-methyl-5'-thioadenosine (phosphorylase route): step 1/1. Functionally, catalyzes the reversible phosphorylation of S-methyl-5'-thioadenosine (MTA) to adenine and 5-methylthioribose-1-phosphate. Involved in the breakdown of MTA, a major by-product of polyamine biosynthesis. Responsible for the first step in the methionine salvage pathway after MTA has been generated from S-adenosylmethionine. Has broad substrate specificity with 6-aminopurine nucleosides as preferred substrates. This is S-methyl-5'-thioadenosine phosphorylase from Anopheles gambiae (African malaria mosquito).